Consider the following 301-residue polypeptide: Bifunctional protein FolD (301 aa).

NADP(+)-binding positions include 169–171, serine 194, and isoleucine 235; that span reads GRS.

It belongs to the tetrahydrofolate dehydrogenase/cyclohydrolase family. In terms of assembly, homodimer.

The catalysed reaction is (6R)-5,10-methylene-5,6,7,8-tetrahydrofolate + NADP(+) = (6R)-5,10-methenyltetrahydrofolate + NADPH. The enzyme catalyses (6R)-5,10-methenyltetrahydrofolate + H2O = (6R)-10-formyltetrahydrofolate + H(+). It functions in the pathway one-carbon metabolism; tetrahydrofolate interconversion. Its function is as follows. Catalyzes the oxidation of 5,10-methylenetetrahydrofolate to 5,10-methenyltetrahydrofolate and then the hydrolysis of 5,10-methenyltetrahydrofolate to 10-formyltetrahydrofolate. The chain is Bifunctional protein FolD from Gloeothece citriformis (strain PCC 7424) (Cyanothece sp. (strain PCC 7424)).